Reading from the N-terminus, the 294-residue chain is Agamous-like MADS-box protein AGL82 (294 aa).

The region spanning 1-51 (MVPKVVDLQRIANDKTRITTYKKRKASLYKKAQEFSTLCGVETCLIVYGPT) is the MADS-box domain.

As to quaternary structure, interacts with MEE14/CBP1.

Its subcellular location is the nucleus. In terms of biological role, probable transcription factor that may function in the maintenance of the proper function of the central cell in pollen tube attraction. The polypeptide is Agamous-like MADS-box protein AGL82 (Arabidopsis thaliana (Mouse-ear cress)).